Reading from the N-terminus, the 416-residue chain is Glutamyl-tRNA reductase (416 aa).

Substrate-binding positions include 51–54 (TCNR), serine 110, 115–117 (EPQ), and glutamine 121. Cysteine 52 acts as the Nucleophile in catalysis. 190-195 (GAGQTG) is a binding site for NADP(+).

The protein belongs to the glutamyl-tRNA reductase family. As to quaternary structure, homodimer.

It catalyses the reaction (S)-4-amino-5-oxopentanoate + tRNA(Glu) + NADP(+) = L-glutamyl-tRNA(Glu) + NADPH + H(+). It participates in porphyrin-containing compound metabolism; protoporphyrin-IX biosynthesis; 5-aminolevulinate from L-glutamyl-tRNA(Glu): step 1/2. Catalyzes the NADPH-dependent reduction of glutamyl-tRNA(Glu) to glutamate 1-semialdehyde (GSA). This Francisella tularensis subsp. tularensis (strain FSC 198) protein is Glutamyl-tRNA reductase.